A 511-amino-acid chain; its full sequence is V-type proton ATPase subunit B, brain isoform (511 aa).

R400 serves as a coordination point for ATP.

It belongs to the ATPase alpha/beta chains family. In terms of assembly, V-ATPase is a heteromultimeric enzyme made up of two complexes: the ATP-hydrolytic V1 complex and the proton translocation V0 complex. The V1 complex consists of three catalytic AB heterodimers that form a heterohexamer, three peripheral stalks each consisting of EG heterodimers, one central rotor including subunits D and F, and the regulatory subunits C and H. The proton translocation complex V0 consists of the proton transport subunit a, a ring of proteolipid subunits c9c'', rotary subunit d, subunits e and f, and the accessory subunits ATP6AP1/Ac45 and ATP6AP2/PRR. As to expression, kidney; found in early distal nephron, encompassing thick ascending limbs and distal convoluted tubules and in the alpha-intercalated cells of the cortical collecting ducts (at protein level). Expressed in epididymal clear cells (at protein level). Mainly expressed in the organ of Corti and spiral ganglion neurons, in both the early postnatal cochlea (P2) and the adult cochlea (P30).

Its subcellular location is the apical cell membrane. The protein resides in the melanosome. It is found in the cytoplasm. The protein localises to the cytoplasmic vesicle. It localises to the secretory vesicle. Its subcellular location is the synaptic vesicle membrane. The protein resides in the clathrin-coated vesicle membrane. Non-catalytic subunit of the V1 complex of vacuolar(H+)-ATPase (V-ATPase), a multisubunit enzyme composed of a peripheral complex (V1) that hydrolyzes ATP and a membrane integral complex (V0) that translocates protons. V-ATPase is responsible for acidifying and maintaining the pH of intracellular compartments and in some cell types, is targeted to the plasma membrane, where it is responsible for acidifying the extracellular environment. In renal intercalated cells, can partially compensate the lack of ATP6V1B1 and mediate secretion of protons (H+) into the urine under base-line conditions but not in conditions of acid load. In Mus musculus (Mouse), this protein is V-type proton ATPase subunit B, brain isoform (Atp6v1b2).